The primary structure comprises 157 residues: Rieske domain-containing protein (157 aa).

M1 carries the N-acetylmethionine modification. At S6 the chain carries Phosphoserine. 2 consecutive Rieske domains span residues 16–94 (SSVC…TGEG) and 17–131 (SVCV…NIYV). 4 residues coordinate [2Fe-2S] cluster: C57, H59, C80, and H83.

The cofactor is [2Fe-2S] cluster.

The polypeptide is Rieske domain-containing protein (RFESD) (Homo sapiens (Human)).